The primary structure comprises 539 residues: Glutamyl-tRNA(Gln) amidotransferase subunit B, mitochondrial (539 aa).

This sequence belongs to the GatB/GatE family. GatB subfamily. Subunit of the heterotrimeric GatFAB amidotransferase (AdT) complex, composed of A, B and F subunits.

It is found in the mitochondrion. It carries out the reaction L-glutamyl-tRNA(Gln) + L-glutamine + ATP + H2O = L-glutaminyl-tRNA(Gln) + L-glutamate + ADP + phosphate + H(+). Functionally, allows the formation of correctly charged Gln-tRNA(Gln) through the transamidation of misacylated Glu-tRNA(Gln) in the mitochondria. The reaction takes place in the presence of glutamine and ATP through an activated gamma-phospho-Glu-tRNA(Gln). This chain is Glutamyl-tRNA(Gln) amidotransferase subunit B, mitochondrial, found in Kluyveromyces lactis (strain ATCC 8585 / CBS 2359 / DSM 70799 / NBRC 1267 / NRRL Y-1140 / WM37) (Yeast).